The sequence spans 443 residues: Ribulose bisphosphate carboxylase large chain (443 aa).

Positions 89 and 139 each coordinate substrate. K141 acts as the Proton acceptor in catalysis. K143 is a substrate binding site. K167, D169, and E170 together coordinate Mg(2+). An N6-carboxylysine modification is found at K167. H260 serves as the catalytic Proton acceptor. Residues R261, H293, and S345 each contribute to the substrate site.

It belongs to the RuBisCO large chain family. Type I subfamily. In terms of assembly, heterohexadecamer of 8 large chains and 8 small chains; disulfide-linked. The disulfide link is formed within the large subunit homodimers. The cofactor is Mg(2+). The disulfide bond which can form in the large chain dimeric partners within the hexadecamer appears to be associated with oxidative stress and protein turnover.

The protein resides in the plastid. It is found in the chloroplast. The catalysed reaction is 2 (2R)-3-phosphoglycerate + 2 H(+) = D-ribulose 1,5-bisphosphate + CO2 + H2O. It carries out the reaction D-ribulose 1,5-bisphosphate + O2 = 2-phosphoglycolate + (2R)-3-phosphoglycerate + 2 H(+). RuBisCO catalyzes two reactions: the carboxylation of D-ribulose 1,5-bisphosphate, the primary event in carbon dioxide fixation, as well as the oxidative fragmentation of the pentose substrate in the photorespiration process. Both reactions occur simultaneously and in competition at the same active site. This Villarsia calthifolia (Marsh flower) protein is Ribulose bisphosphate carboxylase large chain.